The primary structure comprises 467 residues: Megakaryocyte-associated tyrosine-protein kinase (467 aa).

A disordered region spans residues 1-20 (MPTQRWAPGTQCMTKCENSR). Positions 7–69 (APGTQCMTKC…AAAALRQREA (63 aa)) constitute an SH3 domain. The region spanning 81 to 170 (WFHGKISGQE…AICTKLVKPK (90 aa)) is the SH2 domain. A Protein kinase domain is found at 194–443 (LTLGAQIGEG…IVEKLGRELR (250 aa)). ATP-binding positions include 200–208 (IGEGEFGAV) and Lys-221. Asp-311 acts as the Proton acceptor in catalysis. Residues 445-467 (VGVAAPAGGQEAEGSAPTRSQDP) are disordered.

This sequence belongs to the protein kinase superfamily. Tyr protein kinase family. CSK subfamily. In terms of assembly, interacts with KIT. As to expression, enriched in lymphoid tissues.

It localises to the cytoplasm. Its subcellular location is the membrane. It catalyses the reaction L-tyrosyl-[protein] + ATP = O-phospho-L-tyrosyl-[protein] + ADP + H(+). Its function is as follows. Could play a significant role in the signal transduction of hematopoietic cells. May regulate tyrosine kinase activity of SRC-family members in brain. The polypeptide is Megakaryocyte-associated tyrosine-protein kinase (Matk) (Rattus norvegicus (Rat)).